The primary structure comprises 398 residues: Acetate kinase 2 (398 aa).

N7 is a binding site for Mg(2+). K14 is a binding site for ATP. Position 91 (R91) interacts with substrate. D148 (proton donor/acceptor) is an active-site residue. Residues 208–212, 283–285, and 331–335 each bind ATP; these read HLGNG, DFR, and GVGEN. E384 lines the Mg(2+) pocket.

Belongs to the acetokinase family. In terms of assembly, homodimer. Requires Mg(2+) as cofactor. Mn(2+) serves as cofactor.

It localises to the cytoplasm. The enzyme catalyses acetate + ATP = acetyl phosphate + ADP. The protein operates within metabolic intermediate biosynthesis; acetyl-CoA biosynthesis; acetyl-CoA from acetate: step 1/2. Catalyzes the formation of acetyl phosphate from acetate and ATP. Can also catalyze the reverse reaction. The sequence is that of Acetate kinase 2 from Clostridium perfringens (strain 13 / Type A).